The primary structure comprises 429 residues: MTSVVVVGTQWGDEGKGKITDFLSQKADAIARFAGGDNAGHTIKIDGETYKLHLIPSGIFYKEKTSVIGNGLVVNPKSLVTELKGLQERGINTDNLRISNRAHVILPYHIKQDIADEESRGDNKIGTTCKGIGPCYQDKVARIGIRMADLLDKDIFEEKLRHNLAIKNKLFEKFYEVEGLTFEEIFEEYYGYGQEIAKYVTDTSKILNDVLDEGGKVLFEGAQGILLDVDQGTYPYVTSSNPVAGGVAIGAGVGPSRVTSVIGVSKAYTSRVGDGPFPTELFDEVGQQIREVGREYGTTTGRPRRVGWFDTVVVRHSRRVSGITHLALNSIDVLSGLETVKICTAYNYKGETITEYPANLHIIEQCEPIYEELPGWSEDVTACRTLEELPENARRYVERVSELTGIQIATFSVGPAREQTNVLVDVWEA.

GTP contacts are provided by residues 12 to 18 and 40 to 42; these read GDEGKGK and GHT. Asp13 acts as the Proton acceptor in catalysis. The Mg(2+) site is built by Asp13 and Gly40. Residues 13 to 16, 38 to 41, Thr128, Arg142, Gln223, Thr238, and Arg302 each bind IMP; these read DEGK and NAGH. Catalysis depends on His41, which acts as the Proton donor. 298 to 304 contacts substrate; sequence TTTGRPR. GTP is bound by residues Arg304, 330 to 332, and 412 to 414; these read SID and SVG.

Belongs to the adenylosuccinate synthetase family. In terms of assembly, homodimer. Requires Mg(2+) as cofactor.

The protein localises to the cytoplasm. It catalyses the reaction IMP + L-aspartate + GTP = N(6)-(1,2-dicarboxyethyl)-AMP + GDP + phosphate + 2 H(+). The protein operates within purine metabolism; AMP biosynthesis via de novo pathway; AMP from IMP: step 1/2. Plays an important role in the de novo pathway of purine nucleotide biosynthesis. Catalyzes the first committed step in the biosynthesis of AMP from IMP. This Lysinibacillus sphaericus (strain C3-41) protein is Adenylosuccinate synthetase.